The primary structure comprises 767 residues: Mst2 complex subunit nto1 (767 aa).

Residues 194-244 form a PHD-type 1 zinc finger; the sequence is DGRCVICNEAECENSNAIVFCDNCNTSVHQNCYGIPFVPEGQWFCKKCLLA. Residues 248-281 form a C2HC pre-PHD-type zinc finger; the sequence is VICCAFCPDRDGAFCTTLDGRWCHTICAIAIPEI. Residues 305 to 363 form a PHD-type 2 zinc finger; the sequence is LVCCICKLRWGTCVQCSDKNCYAAYHITCARRAGFFYKIYSHSASYDSVDMETYCDKHT. Positions 724-752 are enriched in polar residues; that stretch reads VTGQSNHALPNSVTKKNGTKQPYTKNSLP. Residues 724-767 form a disordered region; sequence VTGQSNHALPNSVTKKNGTKQPYTKNSLPFNERITRSKAKKNYS.

Component of the mst2 complex composed of at least eaf6, mst2, nto1, pdp3, ptf1, ptf2 and tfg3.

It localises to the cytoplasm. It is found in the nucleus. Functionally, component of the mst2 complex which is a highly specific H3 lysine 14 (H3K14) acetyltransferase that functions together with gcn5 to regulate global levels of H3K14 acetylation (H3K14ac), critical for DNA damage checkpoint activation. The protein is Mst2 complex subunit nto1 (nto1) of Schizosaccharomyces pombe (strain 972 / ATCC 24843) (Fission yeast).